We begin with the raw amino-acid sequence, 116 residues long: Insulin (116 aa).

An N-terminal signal peptide occupies residues 1–24 (MAALWLQSFSLLVLLVVSWPGSQA). Disulfide bonds link Cys32–Cys102, Cys44–Cys115, and Cys101–Cys106. Positions 56 to 93 (DVDQLLGFLPPKSGGAAAAGADNEVAEFAFKDQMEMMV) are cleaved as a propeptide — c peptide.

This sequence belongs to the insulin family. Heterodimer of a B chain and an A chain linked by two disulfide bonds.

The protein resides in the secreted. Its function is as follows. Insulin decreases blood glucose concentration. It increases cell permeability to monosaccharides, amino acids and fatty acids. It accelerates glycolysis, the pentose phosphate cycle, and glycogen synthesis in liver. This is Insulin (ins) from Lophius americanus (American angler).